The chain runs to 121 residues: Large ribosomal subunit protein uL14c (121 aa).

Belongs to the universal ribosomal protein uL14 family. In terms of assembly, part of the 50S ribosomal subunit.

It localises to the plastid. It is found in the apicoplast. Binds to 23S rRNA. This chain is Large ribosomal subunit protein uL14c (rpl14), found in Eimeria tenella (Coccidian parasite).